Reading from the N-terminus, the 394-residue chain is Elongation factor Tu 1 (394 aa).

The tr-type G domain occupies 10–204 (KPHVNVGTIG…YLDSYIPEPE (195 aa)). A G1 region spans residues 19–26 (GHVDHGKT). 19-26 (GHVDHGKT) contributes to the GTP binding site. Residue Thr26 coordinates Mg(2+). Positions 60 to 64 (GITIN) are G2. The tract at residues 81–84 (DCPG) is G3. Residues 81-85 (DCPGH) and 136-139 (NKCD) contribute to the GTP site. A G4 region spans residues 136–139 (NKCD). The interval 174 to 176 (SAL) is G5.

Belongs to the TRAFAC class translation factor GTPase superfamily. Classic translation factor GTPase family. EF-Tu/EF-1A subfamily. In terms of assembly, monomer.

It localises to the cytoplasm. It carries out the reaction GTP + H2O = GDP + phosphate + H(+). Functionally, GTP hydrolase that promotes the GTP-dependent binding of aminoacyl-tRNA to the A-site of ribosomes during protein biosynthesis. This Yersinia enterocolitica serotype O:8 / biotype 1B (strain NCTC 13174 / 8081) protein is Elongation factor Tu 1.